The primary structure comprises 201 residues: Acireductone dioxygenase 2 (201 aa).

Positions 83, 85, 89, and 129 each coordinate Fe(2+). Residues histidine 83, histidine 85, glutamate 89, and histidine 129 each contribute to the Ni(2+) site.

It belongs to the acireductone dioxygenase (ARD) family. The cofactor is Fe(2+). Ni(2+) is required as a cofactor.

Its subcellular location is the cytoplasm. It localises to the nucleus. The enzyme catalyses 1,2-dihydroxy-5-(methylsulfanyl)pent-1-en-3-one + O2 = 4-methylsulfanyl-2-oxobutanoate + formate + 2 H(+). The catalysed reaction is 1,2-dihydroxy-5-(methylsulfanyl)pent-1-en-3-one + O2 = 3-(methylsulfanyl)propanoate + CO + formate + 2 H(+). The protein operates within amino-acid biosynthesis; L-methionine biosynthesis via salvage pathway; L-methionine from S-methyl-5-thio-alpha-D-ribose 1-phosphate: step 5/6. Catalyzes 2 different reactions between oxygen and the acireductone 1,2-dihydroxy-3-keto-5-methylthiopentene (DHK-MTPene) depending upon the metal bound in the active site. Fe-containing acireductone dioxygenase (Fe-ARD) produces formate and 2-keto-4-methylthiobutyrate (KMTB), the alpha-ketoacid precursor of methionine in the methionine recycle pathway. Ni-containing acireductone dioxygenase (Ni-ARD) produces methylthiopropionate, carbon monoxide and formate, and does not lie on the methionine recycle pathway. This chain is Acireductone dioxygenase 2, found in Coprinopsis cinerea (strain Okayama-7 / 130 / ATCC MYA-4618 / FGSC 9003) (Inky cap fungus).